Reading from the N-terminus, the 118-residue chain is V-type proton ATPase subunit G 2 (118 aa).

The disordered stretch occupies residues 26-90; the sequence is RKRKARRLKQ…VQGMQSSQQR (65 aa). A compositionally biased stretch (basic and acidic residues) spans 35 to 55; sequence QAKEEAQMEVEQYRREREQEF. Composition is skewed to polar residues over residues 56–69 and 78–89; these read QSKQ…QGNL and RRQVQGMQSSQQ.

Belongs to the V-ATPase G subunit family. As to quaternary structure, V-ATPase is a heteromultimeric enzyme made up of two complexes: the ATP-hydrolytic V1 complex and the proton translocation V0 complex. The V1 complex consists of three catalytic AB heterodimers that form a heterohexamer, three peripheral stalks each consisting of EG heterodimers, one central rotor including subunits D and F, and the regulatory subunits C and H. The proton translocation complex V0 consists of the proton transport subunit a, a ring of proteolipid subunits c9c'', rotary subunit d, subunits e and f, and the accessory subunits ATP6AP1/Ac45 and ATP6AP2/PRR.

Its subcellular location is the melanosome. The protein localises to the cytoplasmic vesicle. It is found in the clathrin-coated vesicle membrane. Functionally, subunit of the V1 complex of vacuolar(H+)-ATPase (V-ATPase), a multisubunit enzyme composed of a peripheral complex (V1) that hydrolyzes ATP and a membrane integral complex (V0) that translocates protons. V-ATPase is responsible for acidifying and maintaining the pH of intracellular compartments and in some cell types, is targeted to the plasma membrane, where it is responsible for acidifying the extracellular environment. This Sus scrofa (Pig) protein is V-type proton ATPase subunit G 2 (ATP6V1G2).